A 276-amino-acid polypeptide reads, in one-letter code: Malectin-A (276 aa).

Residues 1–26 form the signal peptide; that stretch reads MLSIRTVLGPLATILLTVLGPFGAHG. Topologically, residues 27–253 are lumenal; it reads SGLADKVIWA…TPNPYASDNS (227 aa). A carbohydrate-binding residues include Tyr-67, Tyr-89, Tyr-116, Phe-117, and Asp-186. The disordered stretch occupies residues 204–247; the sequence is PMLQPHPGLEKKEEEEEEEEEEGSTSKKQINKNRVQSGPRTPNP. Residues 216-226 show a composition bias toward acidic residues; sequence EEEEEEEEEEG. Over residues 229–247 the composition is skewed to polar residues; the sequence is SKKQINKNRVQSGPRTPNP. N-linked (GlcNAc...) asparagine glycosylation is present at Asn-252. Residues 254-274 traverse the membrane as a helical segment; it reads SLMFPILVAFGVFIPTLFCLC. At 275–276 the chain is on the cytoplasmic side; sequence RL.

This sequence belongs to the malectin family. In terms of tissue distribution, widely expressed throughout development including the anterior neuroectoderm and neural crest at stages 18 and 20, and the retina, hatching gland, otic vesicle, epibranchial placodes, pronephros and tail tip of later states. At stage 41, expressed in the liver, pancreas, branchial arches and proctodeum. Expressed broadly in adults in fat, intestine, gall bladder, eye, muscle, kidney, stomach, liver, heart, pancreas and lung.

The protein resides in the endoplasmic reticulum membrane. Carbohydrate-binding protein with a strong ligand preference for Glc2-N-glycan. May play a role in the early steps of protein N-glycosylation. Can bind di- or higher oligomers but not monomers of glucose, including maltose, maltotriose, maltotetraose, maltoheptaose, nigerose, kojibose, cellobiose and isomaltose, although based on their subcellular locations, these are unlikely to all be physiological ligands. This chain is Malectin-A, found in Xenopus laevis (African clawed frog).